Consider the following 538-residue polypeptide: GSY2-interacting protein PIG2 (538 aa).

A phosphoserine mark is found at S162, S196, S296, and S304. The CBM21 domain occupies 384 to 508; sequence LNLSRGRPVF…NNDSANYKID (125 aa).

Interacts with glycogen synthase 2 (GSY2); possibly also interacts with phosphatase 1 (GLC7). The polypeptide is GSY2-interacting protein PIG2 (PIG2) (Saccharomyces cerevisiae (strain ATCC 204508 / S288c) (Baker's yeast)).